We begin with the raw amino-acid sequence, 146 residues long: Holo-[acyl-carrier-protein] synthase (146 aa).

Mg(2+)-binding residues include aspartate 8 and glutamate 61.

The protein belongs to the P-Pant transferase superfamily. AcpS family. Requires Mg(2+) as cofactor.

Its subcellular location is the cytoplasm. The enzyme catalyses apo-[ACP] + CoA = holo-[ACP] + adenosine 3',5'-bisphosphate + H(+). Functionally, transfers the 4'-phosphopantetheine moiety from coenzyme A to a Ser of acyl-carrier-protein. This Rhodopseudomonas palustris (strain ATCC BAA-98 / CGA009) protein is Holo-[acyl-carrier-protein] synthase.